Consider the following 234-residue polypeptide: MQTYSTPLTLVIVTSLFLFTTQGSSSNAVEPTKKPLKLANYRATCEDRTRTLVTRLNTSHHSVVWQRYDIYSRYMRRMPPLCIITDAYKETTRQGGAAFACTRQNLTLYNLTVKDTGVYLLQDQYTGDVEAFYLIIHPRSFCRALETRRCFYPGPGRVVVTDSQEADRAIISDLKRQWSGLSLHCAWVSGMMIFVGALVICFLRSQRIGEQDAEHLRTDLDTEPLLLTVDGDLQ.

A signal peptide spans 1–23 (MQTYSTPLTLVIVTSLFLFTTQG). Positions 24–122 (SSSNAVEPTK…VKDTGVYLLQ (99 aa)) constitute an Ig-like V-type domain. Topologically, residues 24 to 182 (SSSNAVEPTK…DLKRQWSGLS (159 aa)) are extracellular. N-linked (GlcNAc...) asparagine; by host glycosylation is found at Asn-57, Asn-105, and Asn-110. A helical transmembrane segment spans residues 183–203 (LHCAWVSGMMIFVGALVICFL). The Cytoplasmic segment spans residues 204 to 234 (RSQRIGEQDAEHLRTDLDTEPLLLTVDGDLQ).

It belongs to the RL11 family.

The protein resides in the membrane. The chain is Viral Fc-gamma receptor-like protein IR11 from Homo sapiens (Human).